The following is a 574-amino-acid chain: MANTPHGGVLKDLIARDAPRHDQLEAEAATLPSIVLTERQLCDLELIMNGGFSPLEGFMNQKDYDGVVAESRLADGNLFSMPITLDASKAVIEQAGLKPGSRVTLRDFRDDRNLAILTIDDIYRPDKEKEAKLVFGGDPEHPAIKYLNTKVEEYYIGGKLEAVNKLNHYDYVGLRYTPAELRIHFDKLGWTRVVAFQTRNPMHRAHRELTVRAARARQANVLIHPVVGLTKPGDIDHFTRVRAYQALLPRYPNGMAALALLPLAMRMGGPREAVWHAIIRKNHGATHFIVGRDHAGPGKNSKGQEFYGPYDAQHAVEKYRAELGIEVVEFQQVTYLPDTDEYMPKDEVPAGTKTLDISGTELRNRLRTGAHIPEWFSYPEVVKILRESSPPRALQGFTIFLTGYMNSGKDAIARALQVTLNQQGGRSVTLLLGDTVRHELSSELGFSREDRHTNVQRIAFVAGELTRAGAAVIAAPIAPYEHSRKAAREAVQSTGGSFFLVHVNTPLEYCEATDKRGIYAKARRGEIKGFTGVDDPYEAPTNANLVVDVSKQSVRSIVHEIILMLESEGYFERL.

Positions 1–169 (MANTPHGGVL…LEAVNKLNHY (169 aa)) are N-terminal. The segment at 170 to 394 (DYVGLRYTPA…LRESSPPRAL (225 aa)) is catalytic. Gln-197 serves as a coordination point for sulfate. ATP contacts are provided by residues 197 to 200 (QTRN) and 291 to 294 (GRDH). Residues Thr-198, Arg-199, and Asn-200 contribute to the active site. Arg-199 lines the sulfate pocket. Ala-295 contacts sulfate. Val-333 contacts ATP. The tract at residues 395–574 (QGFTIFLTGY…LESEGYFERL (180 aa)) is allosteric regulation domain; adenylyl-sulfate kinase-like. 3'-phosphoadenylyl sulfate is bound by residues 434 to 437 (DTVR), Arg-451, 477 to 478 (IA), and Arg-516.

This sequence in the N-terminal section; belongs to the sulfate adenylyltransferase family. In the C-terminal section; belongs to the APS kinase family. In terms of assembly, homohexamer. Dimer of trimers.

The protein localises to the cytoplasm. It catalyses the reaction sulfate + ATP + H(+) = adenosine 5'-phosphosulfate + diphosphate. It functions in the pathway sulfur metabolism; hydrogen sulfide biosynthesis; sulfite from sulfate: step 1/3. Allosterically inhibited by 3'-phosphoadenosine 5'-phosphosulfate (PAPS). In terms of biological role, catalyzes the first intracellular reaction of sulfate assimilation, forming adenosine-5'-phosphosulfate (APS) from inorganic sulfate and ATP. Plays an important role in sulfate activation as a component of the biosynthesis pathway of sulfur-containing amino acids. The polypeptide is Sulfate adenylyltransferase (Emericella nidulans (strain FGSC A4 / ATCC 38163 / CBS 112.46 / NRRL 194 / M139) (Aspergillus nidulans)).